The sequence spans 352 residues: MRKKIKVLIVEDSLVVRELLKHIIGSDERFEVMAAVTSAEDCLEMLETQQPDVISLDIRLPGMNGLDATLKIMSRRPTPIVVVAAQVDDNELNIAMNALRAGALSVVEKPVGVTNAGYDTMAAKICTQLAIMSQVQVVRQGINRGLNFGSDDTPARVSQGRPGTYSMVGIVASTGGPQALVQLLGGLGADFPLPILLVQHITSSFLEGFVTWLSGTTPFEARIAQDGEKPVAGKVYVAPVDHHLGLVNDQLVILDLPAVCNQKPSGTVLFGSMARDIGKHGIGVVLTGMGADGSEGLRQMADKGAYTIVEDASTCVVNGMPAAAAKLGAARETLPLPAIAARLRDLALGGEK.

In terms of domain architecture, Response regulatory spans 6–124; the sequence is KVLIVEDSLV…NAGYDTMAAK (119 aa). Asp-57 carries the 4-aspartylphosphate modification. In terms of domain architecture, CheB-type methylesterase spans 162 to 343; that stretch reads PGTYSMVGIV…LPLPAIAARL (182 aa). Residues Ser-173, His-200, and Asp-292 contribute to the active site.

It belongs to the CheB family. Post-translationally, phosphorylated by CheA. Phosphorylation of the N-terminal regulatory domain activates the methylesterase activity.

It is found in the cytoplasm. It catalyses the reaction [protein]-L-glutamate 5-O-methyl ester + H2O = L-glutamyl-[protein] + methanol + H(+). It carries out the reaction L-glutaminyl-[protein] + H2O = L-glutamyl-[protein] + NH4(+). Functionally, involved in chemotaxis. Part of a chemotaxis signal transduction system that modulates chemotaxis in response to various stimuli. Catalyzes the demethylation of specific methylglutamate residues introduced into the chemoreceptors (methyl-accepting chemotaxis proteins or MCP) by CheR. Also mediates the irreversible deamidation of specific glutamine residues to glutamic acid. The protein is Protein-glutamate methylesterase/protein-glutamine glutaminase 2 of Paramagnetospirillum magneticum (strain ATCC 700264 / AMB-1) (Magnetospirillum magneticum).